A 101-amino-acid chain; its full sequence is Putative pterin-4-alpha-carbinolamine dehydratase (101 aa).

The protein belongs to the pterin-4-alpha-carbinolamine dehydratase family.

The enzyme catalyses (4aS,6R)-4a-hydroxy-L-erythro-5,6,7,8-tetrahydrobiopterin = (6R)-L-erythro-6,7-dihydrobiopterin + H2O. This Rhodopseudomonas palustris (strain HaA2) protein is Putative pterin-4-alpha-carbinolamine dehydratase.